The primary structure comprises 314 residues: Small ribosomal subunit biogenesis GTPase RsgA (314 aa).

Residues 78 to 238 enclose the CP-type G domain; that stretch reads SEIFREKLIA…IIDSPGFQEF (161 aa). Residues 127 to 130 and 180 to 188 each bind GTP; these read NKID and GQSGVGKST. 4 residues coordinate Zn(2+): Cys262, Cys267, His269, and Cys275.

This sequence belongs to the TRAFAC class YlqF/YawG GTPase family. RsgA subfamily. Monomer. Associates with 30S ribosomal subunit, binds 16S rRNA. Zn(2+) is required as a cofactor.

It is found in the cytoplasm. One of several proteins that assist in the late maturation steps of the functional core of the 30S ribosomal subunit. Helps release RbfA from mature subunits. May play a role in the assembly of ribosomal proteins into the subunit. Circularly permuted GTPase that catalyzes slow GTP hydrolysis, GTPase activity is stimulated by the 30S ribosomal subunit. The chain is Small ribosomal subunit biogenesis GTPase RsgA from Nitrosomonas europaea (strain ATCC 19718 / CIP 103999 / KCTC 2705 / NBRC 14298).